We begin with the raw amino-acid sequence, 627 residues long: Transketolase-like protein 2 (627 aa).

His39 contributes to the substrate binding site. Thiamine diphosphate contacts are provided by residues Ser42, His79, and 125 to 127 (GSL). Residue Asp157 coordinates Mg(2+). Thiamine diphosphate-binding residues include Gly158 and Asn187. Mg(2+)-binding residues include Asn187 and Leu189. Thiamine diphosphate is bound by residues Lys249 and His263. Substrate-binding residues include His263, Arg323, and Ser350. Positions 371 and 397 each coordinate thiamine diphosphate. Glu371 serves as the catalytic Proton donor. His421 and Asp429 together coordinate substrate. Gln433 is a binding site for thiamine diphosphate. Arg479 is a substrate binding site.

This sequence belongs to the transketolase family. Homodimer. It depends on Mg(2+) as a cofactor. Requires Ca(2+) as cofactor. Mn(2+) is required as a cofactor. The cofactor is Co(2+). Thiamine diphosphate serves as cofactor.

The catalysed reaction is D-sedoheptulose 7-phosphate + D-glyceraldehyde 3-phosphate = aldehydo-D-ribose 5-phosphate + D-xylulose 5-phosphate. Functionally, plays an essential role in total transketolase activity and cell proliferation in cancer cells; after transfection with anti-TKTL1 siRNA, total transketolase activity dramatically decreases and proliferation was significantly inhibited in cancer cells. Plays a pivotal role in carcinogenesis. This is Transketolase-like protein 2 (Tktl2) from Mus musculus (Mouse).